The sequence spans 233 residues: Small ribosomal subunit protein uS2c (233 aa).

The protein belongs to the universal ribosomal protein uS2 family.

The protein resides in the plastid. It localises to the chloroplast. The protein is Small ribosomal subunit protein uS2c (rps2) of Galdieria sulphuraria (Red alga).